The primary structure comprises 361 residues: Phenylalanine--tRNA ligase alpha subunit (361 aa).

Position 260 (glutamate 260) interacts with Mg(2+).

Belongs to the class-II aminoacyl-tRNA synthetase family. Phe-tRNA synthetase alpha subunit type 1 subfamily. In terms of assembly, tetramer of two alpha and two beta subunits. Mg(2+) serves as cofactor.

It localises to the cytoplasm. It catalyses the reaction tRNA(Phe) + L-phenylalanine + ATP = L-phenylalanyl-tRNA(Phe) + AMP + diphosphate + H(+). This chain is Phenylalanine--tRNA ligase alpha subunit, found in Bartonella henselae (strain ATCC 49882 / DSM 28221 / CCUG 30454 / Houston 1) (Rochalimaea henselae).